A 291-amino-acid polypeptide reads, in one-letter code: MKNEIKYLYSDLDGTIVSWNPKTEFVYQNKSYKNFHEVSDATISAFYRLQQKGIKVGIVTGRDYCRVLWLEKQLRTGLPTITLDGAIIFYQNEILSQTYLDDRFIEGINNIVKRFPEAAYKLNSGWISYFTKNPSVIFEIDYAFLGYFNPNTKLQKKFIDSTENWDLNKLKVNQVYFDIDTCPLAMQKEIIELISVSDVNAKIYEHSMYIIKNGVSKASALQSLNQFAIPITKDNTIVCGDGDNDIEMMQWAKHSVSLIGSNPKCFALAKYHTDSVDNDGIANWIEKNLLC.

The active-site Nucleophile is the Asp11. Asp11 is a binding site for Mg(2+). Residue Leu12 participates in phosphate binding. Asp13 is a Mg(2+) binding site. Residues 60-61 (TG) and Lys217 each bind phosphate. A Mg(2+)-binding site is contributed by Asp241. Residue Asn244 coordinates phosphate.

It belongs to the HAD-like hydrolase superfamily. Cof family. The cofactor is Mg(2+).

This chain is Putative phosphatase MG263, found in Mycoplasma genitalium (strain ATCC 33530 / DSM 19775 / NCTC 10195 / G37) (Mycoplasmoides genitalium).